The following is a 256-amino-acid chain: Hydroxypyruvate/pyruvate aldolase (256 aa).

The active-site Proton acceptor is histidine 48. A divalent metal cation-binding residues include glutamate 152 and aspartate 178.

This sequence belongs to the HpcH/HpaI aldolase family. The cofactor is a divalent metal cation.

The enzyme catalyses D-glyceraldehyde + pyruvate = 2-dehydro-3-deoxy-L-galactonate. Aldolase which can catalyze in vitro the aldolisation reaction between hydroxypyruvate (HPA) or pyruvate (PA) and D-glyceraldehyde (D-GA). The condensation of pyruvate and D-glyceraldehyde produces 2-dehydro-3-deoxy-L-galactonate as the major product. Has weak activity with hydroxypyruvate and D-glyceraldehyde. The polypeptide is Hydroxypyruvate/pyruvate aldolase (Roseobacter denitrificans (strain ATCC 33942 / OCh 114) (Erythrobacter sp. (strain OCh 114))).